The following is a 78-amino-acid chain: Probable Fe(2+)-trafficking protein (78 aa).

Belongs to the Fe(2+)-trafficking protein family. As to quaternary structure, monomer.

Could be a mediator in iron transactions between iron acquisition and iron-requiring processes, such as synthesis and/or repair of Fe-S clusters in biosynthetic enzymes. The protein is Probable Fe(2+)-trafficking protein of Buchnera aphidicola subsp. Schizaphis graminum (strain Sg).